Here is a 257-residue protein sequence, read N- to C-terminus: 1-(5-phosphoribosyl)-5-[(5-phosphoribosylamino)methylideneamino] imidazole-4-carboxamide isomerase (257 aa).

The active-site Proton acceptor is the Asp-8. Asp-129 acts as the Proton donor in catalysis.

This sequence belongs to the HisA/HisF family.

It is found in the cytoplasm. The enzyme catalyses 1-(5-phospho-beta-D-ribosyl)-5-[(5-phospho-beta-D-ribosylamino)methylideneamino]imidazole-4-carboxamide = 5-[(5-phospho-1-deoxy-D-ribulos-1-ylimino)methylamino]-1-(5-phospho-beta-D-ribosyl)imidazole-4-carboxamide. It functions in the pathway amino-acid biosynthesis; L-histidine biosynthesis; L-histidine from 5-phospho-alpha-D-ribose 1-diphosphate: step 4/9. The protein is 1-(5-phosphoribosyl)-5-[(5-phosphoribosylamino)methylideneamino] imidazole-4-carboxamide isomerase of Trichormus variabilis (strain ATCC 29413 / PCC 7937) (Anabaena variabilis).